Here is a 236-residue protein sequence, read N- to C-terminus: Small ribosomal subunit protein uS2c (236 aa).

Belongs to the universal ribosomal protein uS2 family.

The protein localises to the plastid. It localises to the chloroplast. The protein is Small ribosomal subunit protein uS2c (rps2) of Panax ginseng (Korean ginseng).